Reading from the N-terminus, the 152-residue chain is Protein PLANT CADMIUM RESISTANCE 2 (152 aa).

A helical transmembrane segment spans residues 57-79; the sequence is TAGALYALIAVVTGCACIYSCFY.

It belongs to the cornifelin family. As to quaternary structure, homooligomer. Expressed in roots, leaves, shoots, stems, flowers and siliques. In leaves, restricted mainly to the vascular tissue. Expressed in all cells in the root tip, in the vascular tissue and the epidermis in the elongation zone, and only in the epidermal cells in the root hair zone.

The protein localises to the cell membrane. Zinc transporter acting in both zinc extrusion and long-distance zinc transport. Involved in the loading of zinc into the xyleme and in the detoxification of excess zinc at the epidermal cells. Acts independently from the zinc transporters HMA2 and HMA4. May be also involved in cadmium resistance. The polypeptide is Protein PLANT CADMIUM RESISTANCE 2 (PCR2) (Arabidopsis thaliana (Mouse-ear cress)).